The sequence spans 122 residues: Large ribosomal subunit protein uL14 (122 aa).

This sequence belongs to the universal ribosomal protein uL14 family. Part of the 50S ribosomal subunit. Forms a cluster with proteins L3 and L19. In the 70S ribosome, L14 and L19 interact and together make contacts with the 16S rRNA in bridges B5 and B8.

Binds to 23S rRNA. Forms part of two intersubunit bridges in the 70S ribosome. This is Large ribosomal subunit protein uL14 from Alkaliphilus metalliredigens (strain QYMF).